Here is a 1032-residue protein sequence, read N- to C-terminus: Protein translocase subunit SecA (1032 aa).

ATP-binding positions include Gln121, 139 to 143 (GEGKT), and Asp570. The tract at residues 945-975 (TAGGSENATEDAPKPAKRGVGGAARRVSNAA) is disordered. Residues Cys994, Cys996, Cys1005, and His1006 each coordinate Zn(2+).

It belongs to the SecA family. Monomer and homodimer. Part of the essential Sec protein translocation apparatus which comprises SecA, SecYEG and auxiliary proteins SecDF. Other proteins may also be involved. Zn(2+) is required as a cofactor.

The protein localises to the cell membrane. Its subcellular location is the cytoplasm. It carries out the reaction ATP + H2O + cellular proteinSide 1 = ADP + phosphate + cellular proteinSide 2.. In terms of biological role, part of the Sec protein translocase complex. Interacts with the SecYEG preprotein conducting channel. Has a central role in coupling the hydrolysis of ATP to the transfer of proteins into and across the cell membrane, serving as an ATP-driven molecular motor driving the stepwise translocation of polypeptide chains across the membrane. The chain is Protein translocase subunit SecA from Herpetosiphon aurantiacus (strain ATCC 23779 / DSM 785 / 114-95).